Here is a 125-residue protein sequence, read N- to C-terminus: Large ribosomal subunit protein bL12 (125 aa).

It belongs to the bacterial ribosomal protein bL12 family. As to quaternary structure, homodimer. Part of the ribosomal stalk of the 50S ribosomal subunit. Forms a multimeric L10(L12)X complex, where L10 forms an elongated spine to which 2 to 4 L12 dimers bind in a sequential fashion. Binds GTP-bound translation factors.

Forms part of the ribosomal stalk which helps the ribosome interact with GTP-bound translation factors. Is thus essential for accurate translation. This is Large ribosomal subunit protein bL12 from Polaromonas sp. (strain JS666 / ATCC BAA-500).